Here is a 1077-residue protein sequence, read N- to C-terminus: ATP-dependent DNA helicase MPH1 (1077 aa).

One can recognise a Helicase ATP-binding domain in the interval 99–266 (IVHRALFENV…EVVDNLQISK (168 aa)). Position 112 to 119 (112 to 119 (IPTGMGKT)) interacts with ATP. Residues 214-217 (DEAH) carry the DEAH box motif. Positions 511-660 (KKVDRIRRLE…SLNYKVTDRI (150 aa)) constitute a Helicase C-terminal domain. Disordered regions lie at residues 536–556 (EKLA…ISGM) and 831–859 (TLSS…PKRQ). Residues 831–841 (TLSSDNKSTPD) show a composition bias toward polar residues.

The protein belongs to the DEAD box helicase family. DEAH subfamily. FANCM sub-subfamily. Interacts with the MHF histone-fold complex to form the FANCM-MHF complex.

It is found in the nucleus. The enzyme catalyses ATP + H2O = ADP + phosphate + H(+). ATP-dependent DNA helicase involved in DNA damage repair by homologous recombination and in genome maintenance. Capable of unwinding D-loops. Plays a role in limiting crossover recombinants during mitotic DNA double-strand break (DSB) repair. Component of a FANCM-MHF complex which promotes gene conversion at blocked replication forks, probably by reversal of the stalled fork. This is ATP-dependent DNA helicase MPH1 from Eremothecium gossypii (strain ATCC 10895 / CBS 109.51 / FGSC 9923 / NRRL Y-1056) (Yeast).